Here is a 278-residue protein sequence, read N- to C-terminus: NH(3)-dependent NAD(+) synthetase (278 aa).

43–50 contributes to the ATP binding site; sequence GISGGVDS. D49 is a binding site for Mg(2+). R146 lines the deamido-NAD(+) pocket. Residue T166 coordinates ATP. Mg(2+) is bound at residue E171. Positions 179 and 186 each coordinate deamido-NAD(+). ATP is bound by residues K195 and T217. 266 to 267 contributes to the deamido-NAD(+) binding site; the sequence is HK.

This sequence belongs to the NAD synthetase family. Homodimer.

It catalyses the reaction deamido-NAD(+) + NH4(+) + ATP = AMP + diphosphate + NAD(+) + H(+). The protein operates within cofactor biosynthesis; NAD(+) biosynthesis; NAD(+) from deamido-NAD(+) (ammonia route): step 1/1. In terms of biological role, catalyzes the ATP-dependent amidation of deamido-NAD to form NAD. Uses ammonia as a nitrogen source. The polypeptide is NH(3)-dependent NAD(+) synthetase (Pseudoalteromonas translucida (strain TAC 125)).